A 270-amino-acid polypeptide reads, in one-letter code: Proteasome inhibitor PI31 subunit (270 aa).

Residue alanine 2 is modified to N-acetylalanine. The tract at residues 2–150 (AGLEVLFASA…PIHEQWEKAN (149 aa)) is important for homodimerization and interaction with FBXO7. Residue serine 152 is modified to Phosphoserine. Position 204 is an omega-N-methylarginine (arginine 204). Arginine 218 is subject to Asymmetric dimethylarginine. The disordered stretch occupies residues 220–270 (LIDPSSGLPNRLPPGAVPPGARFDPFGPIGTSPSGPNPDHLPPPGYDDMYL). Arginine 230 bears the Omega-N-methylarginine mark. At serine 251 the chain carries Phosphoserine. Positions 254–264 (GPNPDHLPPPG) are enriched in pro residues.

Belongs to the proteasome inhibitor PI31 family. In terms of assembly, monomer and homodimer. Interacts with FBXO7.

Its subcellular location is the cytoplasm. It is found in the endoplasmic reticulum. Functionally, plays an important role in control of proteasome function. Inhibits the hydrolysis of protein and peptide substrates by the 20S proteasome. Also inhibits the activation of the proteasome by the proteasome regulatory proteins PA700 and PA28. In Bos taurus (Bovine), this protein is Proteasome inhibitor PI31 subunit (PSMF1).